Reading from the N-terminus, the 373-residue chain is Cobalt-precorrin-5B C(1)-methyltransferase (373 aa).

Belongs to the CbiD family.

The enzyme catalyses Co-precorrin-5B + S-adenosyl-L-methionine = Co-precorrin-6A + S-adenosyl-L-homocysteine. Its pathway is cofactor biosynthesis; adenosylcobalamin biosynthesis; cob(II)yrinate a,c-diamide from sirohydrochlorin (anaerobic route): step 6/10. Catalyzes the methylation of C-1 in cobalt-precorrin-5B to form cobalt-precorrin-6A. This is Cobalt-precorrin-5B C(1)-methyltransferase from Listeria monocytogenes serotype 4a (strain HCC23).